We begin with the raw amino-acid sequence, 143 residues long: uncharacterized protein (143 aa).

Positions 5–137 constitute an HTH marR-type domain; the sequence is DARLASDLSL…LRNAADLILE (133 aa). A DNA-binding region (H-T-H motif) is located at residues 51-74; that stretch reads PGALAIRERVRPPSMTRVIASLAD.

Homodimer.

This is an uncharacterized protein from Mycobacterium leprae (strain TN).